The following is a 1256-amino-acid chain: Bifunctional autolysin (1256 aa).

The signal sequence occupies residues 1–29 (MAKKFNYKLPSMVALTLVGSAVTAHQVQA). Residues 103–138 (GDTRANQSATTNNTQPVAKSTSTTAPKTNTNVTNAG) are compositionally biased toward polar residues. 3 disordered regions span residues 103–151 (GDTR…NSEN), 173–219 (AAAP…KYKP), and 419–440 (TQST…PSTG). 2 stretches are compositionally biased toward low complexity: residues 173-196 (AAAP…KVTT) and 421-439 (STTT…KPST). The segment at 199–775 (ASAQPRSVAA…AVAQPKTAVK (577 aa)) is N-acetylmuramoyl-L-alanine amidase. 7 GW domains span residues 443–517 (TVAA…YNTA), 519–593 (SPVN…DTAK), 612–686 (TVSS…YNNA), 688–762 (SPVN…VPAA), 784–859 (TTQT…VQNL), 861–936 (KEVK…APTA), and 943–1017 (AAKD…KELI). The interval 776 to 1256 (AYTVTKPQTT…GKYFDIPQYK (481 aa)) is endo-beta-N-acetylglucosaminidase.

This sequence in the N-terminal section; belongs to the N-acetylmuramoyl-L-alanine amidase 2 family. In the C-terminal section; belongs to the glycosyl hydrolase 73 family. In terms of assembly, oligomer; forms a ring structure at the cell surface which is important for efficient partitioning of daughter cells after cell division. Undergoes proteolytic processing to generate the two extracellular lytic enzymes, probably at the septal region on the cell surface.

It is found in the secreted. The catalysed reaction is Hydrolyzes the link between N-acetylmuramoyl residues and L-amino acid residues in certain cell-wall glycopeptides.. It catalyses the reaction an N(4)-(oligosaccharide-(1-&gt;3)-[oligosaccharide-(1-&gt;6)]-beta-D-Man-(1-&gt;4)-beta-D-GlcNAc-(1-&gt;4)-alpha-D-GlcNAc)-L-asparaginyl-[protein] + H2O = an oligosaccharide-(1-&gt;3)-[oligosaccharide-(1-&gt;6)]-beta-D-Man-(1-&gt;4)-D-GlcNAc + N(4)-(N-acetyl-beta-D-glucosaminyl)-L-asparaginyl-[protein]. In terms of biological role, endohydrolysis of the di-N-acetylchitobiosyl unit in high-mannose glycopeptides and glycoproteins containing the -[(Man)5(GlcNAc)2]-Asn structure. One N-acetyl-D-glucosamine residue remains attached to the protein; the rest of the oligosaccharide is released intact. Cleaves the peptidoglycan connecting the daughter cells at the end of the cell division cycle, resulting in the separation of the two newly divided cells. Acts as an autolysin in penicillin-induced lysis. This Staphylococcus aureus (strain MW2) protein is Bifunctional autolysin (atl).